Reading from the N-terminus, the 99-residue chain is Large ribosomal subunit protein eL21 (99 aa).

Residues 1–14 (MPNSNGPLSNSGGK) show a composition bias toward polar residues. Residues 1–38 (MPNSNGPLSNSGGKLQNDPRDRGTSPPQRAIADYDDGE) are disordered.

This sequence belongs to the eukaryotic ribosomal protein eL21 family.

This Halobacterium salinarum (strain ATCC 29341 / DSM 671 / R1) protein is Large ribosomal subunit protein eL21.